The sequence spans 340 residues: MAAPLLHTRLPGDAAASPSAVKMLGASRTGISNMRALENDFFNSPPRKTVQFGGTVTEVLLKYKTGETNDFELLKNQLLDPDIKDDQIINWLLEFRSSIMYLTKDFEQLISIILRLPWLNRSQTVVEEYLAFLGNLVSAQTVFLRPCLSMIASHFVPPRVIIKEGDVDVSDSDDEDDNLPANFDTSQSLANNSKICTIECYVHNLLRISVYFPTLRHEILELIIEKLLKLDVNASRQGIEDAEETANQTCGGTDSTEGLCNMGFAEAFLEPLWKKLQDPSNPAIIRQAAGNYIGSFLARAKFIPLMIREQRHSAMLLSMDHFTQPAKLCSTPLFLDTSSF.

Belongs to the RRN3 family.

The chain is Putative RRN3-like protein RRN3P2 (RRN3P2) from Homo sapiens (Human).